The sequence spans 207 residues: Large ribosomal subunit protein uL3c (207 aa).

Residues 115–151 are disordered; sequence IGKGFAGNQKRHNFSRGPMTHGSKNHRLPGSIGAGST.

The protein belongs to the universal ribosomal protein uL3 family. As to quaternary structure, part of the 50S ribosomal subunit.

It localises to the plastid. The protein resides in the chloroplast. One of the primary rRNA binding proteins, it binds directly near the 3'-end of the 23S rRNA, where it nucleates assembly of the 50S subunit. The protein is Large ribosomal subunit protein uL3c (rpl3) of Emiliania huxleyi (Coccolithophore).